A 265-amino-acid chain; its full sequence is tRNA pseudouridine synthase A (265 aa).

Asp58 (nucleophile) is an active-site residue. Residue Tyr116 participates in substrate binding.

This sequence belongs to the tRNA pseudouridine synthase TruA family. Homodimer.

It catalyses the reaction uridine(38/39/40) in tRNA = pseudouridine(38/39/40) in tRNA. Its function is as follows. Formation of pseudouridine at positions 38, 39 and 40 in the anticodon stem and loop of transfer RNAs. The polypeptide is tRNA pseudouridine synthase A (Neisseria meningitidis serogroup C (strain 053442)).